A 169-amino-acid chain; its full sequence is Peptide deformylase (169 aa).

Residues C91 and H133 each contribute to the Fe cation site. E134 is an active-site residue. H137 is a Fe cation binding site.

It belongs to the polypeptide deformylase family. The cofactor is Fe(2+).

It carries out the reaction N-terminal N-formyl-L-methionyl-[peptide] + H2O = N-terminal L-methionyl-[peptide] + formate. Functionally, removes the formyl group from the N-terminal Met of newly synthesized proteins. Requires at least a dipeptide for an efficient rate of reaction. N-terminal L-methionine is a prerequisite for activity but the enzyme has broad specificity at other positions. The polypeptide is Peptide deformylase (Salmonella typhi).